We begin with the raw amino-acid sequence, 462 residues long: Argininosuccinate lyase (462 aa).

This sequence belongs to the lyase 1 family. Argininosuccinate lyase subfamily.

The protein localises to the cytoplasm. The enzyme catalyses 2-(N(omega)-L-arginino)succinate = fumarate + L-arginine. The protein operates within amino-acid biosynthesis; L-arginine biosynthesis; L-arginine from L-ornithine and carbamoyl phosphate: step 3/3. The polypeptide is Argininosuccinate lyase (Hydrogenovibrio crunogenus (strain DSM 25203 / XCL-2) (Thiomicrospira crunogena)).